We begin with the raw amino-acid sequence, 369 residues long: Chaperone protein DnaJ (369 aa).

A J domain is found at 3-67 (DHYEVLGVER…QQRQQYDRGG (65 aa)). A CR-type zinc finger spans residues 123 to 205 (GAHRDLEVDT…CQGQGRVRAR (83 aa)). Residues C136, C139, C153, C156, C179, C182, C193, and C196 each contribute to the Zn(2+) site. 4 CXXCXGXG motif repeats span residues 136-143 (CETCDGSC), 153-160 (CDICHGTG), 179-186 (CGSCRGYG), and 193-200 (CVTCQGQG).

The protein belongs to the DnaJ family. As to quaternary structure, homodimer. Zn(2+) is required as a cofactor.

Its subcellular location is the cytoplasm. Its function is as follows. Participates actively in the response to hyperosmotic and heat shock by preventing the aggregation of stress-denatured proteins and by disaggregating proteins, also in an autonomous, DnaK-independent fashion. Unfolded proteins bind initially to DnaJ; upon interaction with the DnaJ-bound protein, DnaK hydrolyzes its bound ATP, resulting in the formation of a stable complex. GrpE releases ADP from DnaK; ATP binding to DnaK triggers the release of the substrate protein, thus completing the reaction cycle. Several rounds of ATP-dependent interactions between DnaJ, DnaK and GrpE are required for fully efficient folding. Also involved, together with DnaK and GrpE, in the DNA replication of plasmids through activation of initiation proteins. In Leifsonia xyli subsp. xyli (strain CTCB07), this protein is Chaperone protein DnaJ.